A 685-amino-acid chain; its full sequence is Protein OCTOPUS (685 aa).

Disordered stretches follow at residues M1–H34, R152–E202, and K280–R314. Residues V179–E202 are compositionally biased toward acidic residues. The span at K280–R291 shows a compositional bias: basic residues. The span at N292–R314 shows a compositional bias: basic and acidic residues. S318 bears the Phosphoserine mark. The tract at residues V419 to R471 is disordered. Positions L549–E578 form a coiled coil. The disordered stretch occupies residues S584 to G640. Over residues V601 to S611 the composition is skewed to low complexity.

It belongs to the OCTOPUS family. Interacts with VCC. In terms of processing, phosphorylation at Ser-318 amplifies the promotion of protophloem differentiation. Expressed in provascular cells and phloem initials (e.g. protophloem, metaphloem, sieve element precursor cells and sieve element procambium precursor cells).

It is found in the cell membrane. Its subcellular location is the cytoplasm. Its function is as follows. Potentiates primary root protophloem differentiation. Required, together with VCC, for embryo provasculature development and cotyledon vascular complexity and connectivity. Regulates roots architecture. Mediates the recruitment of ASK7/BIN2 to the plasma membrane. This Arabidopsis thaliana (Mouse-ear cress) protein is Protein OCTOPUS.